The chain runs to 457 residues: 5' exonuclease Apollo (457 aa).

The TBM motif lies at 425–437 (ELPKQYLLTPLNA).

It belongs to the DNA repair metallo-beta-lactamase (DRMBL) family. In terms of assembly, interacts with TERF2; the interaction is direct.

Its subcellular location is the chromosome. It localises to the telomere. It is found in the nucleus. The catalysed reaction is a beta-lactam + H2O = a substituted beta-amino acid. 5'-3' exonuclease that plays a central role in telomere maintenance and protection during S-phase. Participates in the protection of telomeres against non-homologous end-joining (NHEJ)-mediated repair, thereby ensuring that telomeres do not fuse. Plays a key role in telomeric loop (T loop) formation by being recruited by TERF2 at the leading end telomeres and by processing leading-end telomeres immediately after their replication via its exonuclease activity: generates 3' single-stranded overhang at the leading end telomeres avoiding blunt leading-end telomeres that are vulnerable to end-joining reactions and expose the telomere end in a manner that activates the DNA repair pathways. May be required for DNA interstrand cross-link repair. Possesses beta-lactamase activity, catalyzing the hydrolysis of penicillin G and nitrocefin. Exhibits no activity towards other beta-lactam antibiotic classes including cephalosporins (cefotaxime) and carbapenems (imipenem). The polypeptide is 5' exonuclease Apollo (DCLRE1B) (Gallus gallus (Chicken)).